The sequence spans 82 residues: Diphthamide biosynthesis protein 3 (82 aa).

The region spanning 8–64 is the DPH-type MB domain; sequence IYDEVEIEDMTYDPALQTYSYPCPCGDKFEIALADLQDGQDIAVCPSCSLMVRVIFE. Fe cation is bound by residues C30, C32, C52, and C55.

This sequence belongs to the DPH3 family. As to quaternary structure, component of the 2-(3-amino-3-carboxypropyl)histidine synthase complex composed of dph-1, dph-2, dph-3 and a NADH-dependent reductase, predominantly cbr-1. Requires Fe(2+) as cofactor.

The protein resides in the cytoplasm. It is found in the nucleus. It carries out the reaction [3Fe-4S](1+)-[protein] + Fe(2+)-[Dph3] = [3Fe-4S](0)-[protein] + Fe(3+)-[Dph3]. The catalysed reaction is 2 [3Fe-4S](0)-[protein] + 2 Fe(2+)-[Dph3] + NADH = 2 [4Fe-4S](1+)-[protein] + 2 [Dph3] + NAD(+) + H(+). It functions in the pathway protein modification; peptidyl-diphthamide biosynthesis. Functionally, required for the first step of diphthamide biosynthesis, a post-translational modification of histidine which occurs in elongation factor 2. Dph-1 and dph-2 transfer a 3-amino-3-carboxypropyl (ACP) group from S-adenosyl-L-methionine (SAM) to a histidine residue, the reaction is assisted by a reduction system comprising dph-3 and a NADH-dependent reductase, predominantly cbr-1. Acts as an electron donor to reduce the Fe-S cluster in dph1-dph2 keeping the [4Fe-4S] clusters in the active and reduced state. Restores iron to dph-1-dph-2 iron-sulfur clusters which have degraded from [4Fe-4S] to [3Fe-4S] by donating an iron atom to reform [4Fe-4S] clusters, in a manner dependent on the presence of elongation factor 2 and SAM. Associates with the elongator complex and is required for tRNA Wobble base modifications mediated by the elongator complex. The elongator complex is required for multiple tRNA modifications, including mcm5U (5-methoxycarbonylmethyl uridine), mcm5s 2U (5-methoxycarbonylmethyl-2-thiouridine), and ncm5U (5-carbamoylmethyl uridine). In Neurospora crassa (strain ATCC 24698 / 74-OR23-1A / CBS 708.71 / DSM 1257 / FGSC 987), this protein is Diphthamide biosynthesis protein 3 (dph-3).